A 123-amino-acid chain; its full sequence is Large ribosomal subunit protein bL20 (123 aa).

This sequence belongs to the bacterial ribosomal protein bL20 family.

Binds directly to 23S ribosomal RNA and is necessary for the in vitro assembly process of the 50S ribosomal subunit. It is not involved in the protein synthesizing functions of that subunit. This chain is Large ribosomal subunit protein bL20, found in Chlamydia trachomatis serovar L2b (strain UCH-1/proctitis).